A 603-amino-acid chain; its full sequence is MKNLWIWSLPLIVLAFIGWQELANQMPVATSRMTYGRLLEYMQMGWVKRIDVYDRTALIEASSPETGWQWIRVDLPANSSDWLEQAKTLHIDVDVHAVSNWINVASNWIIPLIIIGVVIWLLSRSASSNTTGALNFGKSKARFQMVAKTGIMFDDVAGIEEAKEELAEVVAFLKNPSKFLAVGASIPKGVLLVGPPGTGKTLLAKAIAGEASVPFFSISGSEFVEMFVGVGASRVRDLFKKAKQNAPCLVFIDEIDAVGRQRGAGIGGGNDEREQTLNQLLTEMDGFEGNTGVIVIAATNRVDVLDAALLRPGRFDRQIMVSMPDVKSRIAILKVHANQKKLHPQVSLEAVARRTAGFAGADLANLLNEAAILAVRRGLKQITWKEIDDAIDRVIAGMEGTPIMDGKIKRLIAYHETGHALTATLLPNHPPVQKVTLIPRRQAKGLTWFMQDNERDLLSKSQLMSMIMVALGGRAAEEAVFGNAEVTTGASNDLQQVTNLARQMVTRFGMSSLGPLCLETGNEEIFLGRDMRLMPEVSEEVIAQIDAQVRGMIEACYEKVLELMQANRVVMDRIVEELMEKETLDGKEFRQLVSQAARLTAVN.

Topologically, residues Met-1–Lys-2 are stromal. Residues Asn-3–Ala-23 traverse the membrane as a helical segment. Topologically, residues Asn-24–Trp-101 are lumenal. The chain crosses the membrane as a helical span at residues Ile-102 to Leu-122. Topologically, residues Ser-123–Asn-603 are stromal. Gly-194–Thr-201 is an ATP binding site. Zn(2+) is bound at residue His-415. Glu-416 is an active-site residue. Zn(2+) contacts are provided by His-419 and Asp-493.

This sequence in the central section; belongs to the AAA ATPase family. In the C-terminal section; belongs to the peptidase M41 family. In terms of assembly, homohexamer. Zn(2+) serves as cofactor.

The protein localises to the plastid. The protein resides in the chloroplast thylakoid membrane. Acts as a processive, ATP-dependent zinc metallopeptidase. The chain is ATP-dependent zinc metalloprotease FtsH from Cyanidioschyzon merolae (strain NIES-3377 / 10D) (Unicellular red alga).